The following is a 365-amino-acid chain: tRNA-specific 2-thiouridylase MnmA (365 aa).

ATP contacts are provided by residues 6 to 13 and methionine 32; that span reads AMSGGVDS. Residue cysteine 101 is the Nucleophile of the active site. Cysteine 101 and cysteine 199 are joined by a disulfide. Residue glycine 125 participates in ATP binding. The segment at 148 to 150 is interaction with tRNA; sequence KDQ. Residue cysteine 199 is the Cysteine persulfide intermediate of the active site.

It belongs to the MnmA/TRMU family.

The protein localises to the cytoplasm. It carries out the reaction S-sulfanyl-L-cysteinyl-[protein] + uridine(34) in tRNA + AH2 + ATP = 2-thiouridine(34) in tRNA + L-cysteinyl-[protein] + A + AMP + diphosphate + H(+). Functionally, catalyzes the 2-thiolation of uridine at the wobble position (U34) of tRNA, leading to the formation of s(2)U34. The protein is tRNA-specific 2-thiouridylase MnmA of Kineococcus radiotolerans (strain ATCC BAA-149 / DSM 14245 / SRS30216).